The primary structure comprises 450 residues: Neuraminidase (450 aa).

The Intravirion segment spans residues 1 to 6 (MNPNQK). A helical transmembrane segment spans residues 7–27 (IITIGSICMVVGIISLMLQIG). The interval 11–33 (GSICMVVGIISLMLQIGNIISVW) is involved in apical transport and lipid raft association. Residues 28-450 (NIISVWVSHI…GAELPFTIDK (423 aa)) are Virion surface-facing. The segment at 36–71 (HIIQTWHPNQPEPCNQSINFYTEQAAASVTLAGNSS) is hypervariable stalk region. 2 N-linked (GlcNAc...) asparagine; by host glycosylation sites follow: N50 and N69. The tract at residues 72–450 (LCPISGWAIY…GAELPFTIDK (379 aa)) is head of neuraminidase. Disulfide bonds link C73–C398, C105–C110, C165–C212, C214–C219, C260–C273, C262–C271, C299–C316, and C402–C427. R99 contacts substrate. A glycan (N-linked (GlcNAc...) asparagine; by host) is linked at N127. The active-site Proton donor/acceptor is D132. R133 provides a ligand contact to substrate. An N-linked (GlcNAc...) asparagine; by host glycan is attached at N216. 258-259 (EE) contacts substrate. Residue R274 coordinates substrate. Ca(2+)-binding residues include D275, G279, and D305. A substrate-binding site is contributed by R349. Y383 serves as the catalytic Nucleophile.

The protein belongs to the glycosyl hydrolase 34 family. Homotetramer. It depends on Ca(2+) as a cofactor. In terms of processing, N-glycosylated.

It is found in the virion membrane. The protein localises to the host apical cell membrane. It carries out the reaction Hydrolysis of alpha-(2-&gt;3)-, alpha-(2-&gt;6)-, alpha-(2-&gt;8)- glycosidic linkages of terminal sialic acid residues in oligosaccharides, glycoproteins, glycolipids, colominic acid and synthetic substrates.. Its activity is regulated as follows. Inhibited by the neuraminidase inhibitors zanamivir (Relenza) and oseltamivir (Tamiflu). These drugs interfere with the release of progeny virus from infected cells and are effective against all influenza strains. Resistance to neuraminidase inhibitors is quite rare. Its function is as follows. Catalyzes the removal of terminal sialic acid residues from viral and cellular glycoconjugates. Cleaves off the terminal sialic acids on the glycosylated HA during virus budding to facilitate virus release. Additionally helps virus spread through the circulation by further removing sialic acids from the cell surface. These cleavages prevent self-aggregation and ensure the efficient spread of the progeny virus from cell to cell. Otherwise, infection would be limited to one round of replication. Described as a receptor-destroying enzyme because it cleaves a terminal sialic acid from the cellular receptors. May facilitate viral invasion of the upper airways by cleaving the sialic acid moieties on the mucin of the airway epithelial cells. Likely to plays a role in the budding process through its association with lipid rafts during intracellular transport. May additionally display a raft-association independent effect on budding. Plays a role in the determination of host range restriction on replication and virulence. Sialidase activity in late endosome/lysosome traffic seems to enhance virus replication. In Aves (Cat), this protein is Neuraminidase.